The primary structure comprises 111 residues: COX assembly mitochondrial protein (111 aa).

Positions 39 to 82 (YKKCANFVQAMADCAKANGMKVFPTCDKQRDEMKSCLLFYQTDE) constitute a CHCH domain. 2 short sequence motifs (cx9C motif) span residues 42 to 52 (CANFVQAMADC) and 64 to 74 (CDKQRDEMKSC). Cystine bridges form between Cys42-Cys74 and Cys52-Cys64.

The protein belongs to the CMC family.

The protein localises to the mitochondrion inner membrane. Functionally, required for mitochondrial cytochrome c oxidase (COX) assembly and respiration. Binds copper. May be involved in copper trafficking and distribution to mitochondrial COX and SOD1. This Saccharomyces cerevisiae (strain RM11-1a) (Baker's yeast) protein is COX assembly mitochondrial protein (CMC1).